A 123-amino-acid polypeptide reads, in one-letter code: Major pollen allergen Ole e 10 (123 aa).

An N-terminal signal peptide occupies residues 1–21 (MRGTAGVPDQPVPTPTPSVPT). The segment at 1 to 37 (MRGTAGVPDQPVPTPTPSVPTSSSPVPKPPTQGNKKW) is disordered. Cys-38 and Cys-101 are oxidised to a cystine.

The N-terminus is blocked. Post-translationally, phosphorylated at Ser-24 when expressed as a recombinant protein in a heterologous system. In terms of processing, not glycosylated. Contains two additional disulfide bonds. As to expression, expressed in mature and germinating pollen.

It is found in the cytoplasmic vesicle. Carbohydrate-binding protein binding preferentially 1,3-beta-glucans. May be involved in pollen tube wall re-formation during germination. The polypeptide is Major pollen allergen Ole e 10 (Olea europaea (Common olive)).